We begin with the raw amino-acid sequence, 199 residues long: MIALLTGRLAHKSPDAIIIDVNGVGYRVQIPFSTYYELPEEGKTVSLSIHTHVKEDSISLFGFRTLAEKEFFQLLISVSGIGPKMARDILSNIQPEELAAAIVQGNLVRLSSIPGIGKKTAERLVLELKEKVRKMDVAPSAQEAPSSEAPAEVADDVASALVNLGYKEAVVRKVLAEMSIEPDASTEAVLRQALKVLMK.

A domain I region spans residues 1-64; the sequence is MIALLTGRLA…EDSISLFGFR (64 aa). The interval 65–143 is domain II; that stretch reads TLAEKEFFQL…KMDVAPSAQE (79 aa). The segment at 144–154 is flexible linker; sequence APSSEAPAEVA. The interval 154 to 199 is domain III; sequence ADDVASALVNLGYKEAVVRKVLAEMSIEPDASTEAVLRQALKVLMK.

This sequence belongs to the RuvA family. Homotetramer. Forms an RuvA(8)-RuvB(12)-Holliday junction (HJ) complex. HJ DNA is sandwiched between 2 RuvA tetramers; dsDNA enters through RuvA and exits via RuvB. An RuvB hexamer assembles on each DNA strand where it exits the tetramer. Each RuvB hexamer is contacted by two RuvA subunits (via domain III) on 2 adjacent RuvB subunits; this complex drives branch migration. In the full resolvosome a probable DNA-RuvA(4)-RuvB(12)-RuvC(2) complex forms which resolves the HJ.

The protein resides in the cytoplasm. Functionally, the RuvA-RuvB-RuvC complex processes Holliday junction (HJ) DNA during genetic recombination and DNA repair, while the RuvA-RuvB complex plays an important role in the rescue of blocked DNA replication forks via replication fork reversal (RFR). RuvA specifically binds to HJ cruciform DNA, conferring on it an open structure. The RuvB hexamer acts as an ATP-dependent pump, pulling dsDNA into and through the RuvAB complex. HJ branch migration allows RuvC to scan DNA until it finds its consensus sequence, where it cleaves and resolves the cruciform DNA. The chain is Holliday junction branch migration complex subunit RuvA from Geobacter sulfurreducens (strain ATCC 51573 / DSM 12127 / PCA).